The sequence spans 681 residues: DNA ligase (681 aa).

NAD(+)-binding positions include 42–46, 91–92, and glutamate 120; these read DAEYD and SL. Lysine 122 (N6-AMP-lysine intermediate) is an active-site residue. Residues arginine 143, glutamate 180, lysine 302, and lysine 326 each coordinate NAD(+). Positions 420, 423, 438, and 444 each coordinate Zn(2+). In terms of domain architecture, BRCT spans 603-681; the sequence is ADAQPLLGQT…EAGLIELIGL (79 aa).

The protein belongs to the NAD-dependent DNA ligase family. LigA subfamily. Mg(2+) is required as a cofactor. It depends on Mn(2+) as a cofactor.

It catalyses the reaction NAD(+) + (deoxyribonucleotide)n-3'-hydroxyl + 5'-phospho-(deoxyribonucleotide)m = (deoxyribonucleotide)n+m + AMP + beta-nicotinamide D-nucleotide.. Its function is as follows. DNA ligase that catalyzes the formation of phosphodiester linkages between 5'-phosphoryl and 3'-hydroxyl groups in double-stranded DNA using NAD as a coenzyme and as the energy source for the reaction. It is essential for DNA replication and repair of damaged DNA. This is DNA ligase from Shewanella amazonensis (strain ATCC BAA-1098 / SB2B).